Consider the following 305-residue polypeptide: Heme A synthase (305 aa).

Residues 1 to 6 (MKKFLK) lie on the Cytoplasmic side of the membrane. The chain crosses the membrane as a helical span at residues 7 to 27 (VWSVLTIICMTVVVFGGALVT). Residues 28 to 63 (KTGSADGCGNSWPLCNGQLVRLTDVTPEKLIEFMHR) lie on the Extracellular side of the membrane. The cysteines at positions 35 and 42 are disulfide-linked. Residue Glu-59 is part of the active site. His-62 contributes to the heme o binding site. A helical transmembrane segment spans residues 64-84 (MTTGISSIFVIVLAICAWIYM). Topologically, residues 85-92 (KNRRETKP) are cytoplasmic. A helical transmembrane segment spans residues 93–113 (LAIIAVLFLIIQALMGMAAVV). The Extracellular segment spans residues 114–122 (WGQNPYIMA). The helical transmembrane segment at 123-143 (LHFGISIICYASIVLLALMIF) threads the bilayer. His-124 contacts heme o. Residues 144–160 (EVDRKFDARNLVMGTKL) lie on the Cytoplasmic side of the membrane. The chain crosses the membrane as a helical span at residues 161–181 (RVNIYALTIYTYLAVYTGALV). Residues 182–212 (RHEKASMAVPVWPFENGHFIMPTSVQDYVQY) are Extracellular-facing. The chain crosses the membrane as a helical span at residues 213 to 233 (FHRLAAFILIVWLLYVTWLVF). His-214 lines the heme b pocket. Residues 234-240 (RDYRRYR) are Cytoplasmic-facing. A helical membrane pass occupies residues 241-261 (VLTFSMVLSLVFIALQAVTGA). The Extracellular segment spans residues 262-271 (LSVYTGVNLY). Residues 272–292 (IALAHSLIITMLFALLCYLCL) form a helical membrane-spanning segment. Residue His-276 participates in heme b binding. Residues 293–305 (LASRSKSNRLRIK) lie on the Cytoplasmic side of the membrane.

Belongs to the COX15/CtaA family. Type 1 subfamily. As to quaternary structure, interacts with CtaB. Requires heme b as cofactor.

Its subcellular location is the cell membrane. The catalysed reaction is Fe(II)-heme o + 2 A + H2O = Fe(II)-heme a + 2 AH2. The protein operates within porphyrin-containing compound metabolism; heme A biosynthesis; heme A from heme O: step 1/1. Functionally, catalyzes the conversion of heme O to heme A by two successive hydroxylations of the methyl group at C8. The first hydroxylation forms heme I, the second hydroxylation results in an unstable dihydroxymethyl group, which spontaneously dehydrates, resulting in the formyl group of heme A. This is Heme A synthase from Listeria monocytogenes serovar 1/2a (strain ATCC BAA-679 / EGD-e).